We begin with the raw amino-acid sequence, 525 residues long: uncharacterized protein (525 aa).

The next 2 membrane-spanning stretches (helical) occupy residues 36–56 (AVAA…TLAL) and 61–81 (ALPA…AAAI). One can recognise a PAC domain in the interval 173–228 (SAVDIRLERTSADGPQFAHIYCEMTPLRDAEGNLLAIVAQSRDVSEEARLQAEAAA). In terms of domain architecture, Histidine kinase spans 246 to 466 (AVSHELRTPL…VIVVTIPSDA (221 aa)). His249 is subject to Phosphohistidine; by autocatalysis. The disordered stretch occupies residues 506 to 525 (LHTGEIGREGGHGAAQAKTA).

The protein resides in the cell membrane. The enzyme catalyses ATP + protein L-histidine = ADP + protein N-phospho-L-histidine.. This is an uncharacterized protein from Rhizobium meliloti (strain 1021) (Ensifer meliloti).